Consider the following 92-residue polypeptide: Small ribosomal subunit protein uS19 (92 aa).

It belongs to the universal ribosomal protein uS19 family.

In terms of biological role, protein S19 forms a complex with S13 that binds strongly to the 16S ribosomal RNA. The sequence is that of Small ribosomal subunit protein uS19 from Methylobacterium sp. (strain 4-46).